We begin with the raw amino-acid sequence, 183 residues long: Capsid protein (183 aa).

The disordered stretch occupies residues 136 to 183 (NAPILSTLPETTVVRRRGRSPRRRTPSPRRRRSQSPRRRRSQSPASQC). Residues 149–176 (VRRRGRSPRRRTPSPRRRRSQSPRRRRS) show a composition bias toward basic residues. A phosphoserine; by host mark is found at S155, S162, and S170. Residues 155–161 (SPRRRTP) form a 1; half-length repeat. A 3 X 8 AA repeats of S-P-R-R-R-[PR]-S-Q region spans residues 155–177 (SPRRRTPSPRRRRSQSPRRRRSQ). The Bipartite nuclear localization signal motif lies at 158 to 175 (RRTPSPRRRRSQSPRRRR). 2 tandem repeats follow at residues 162–169 (SPRRRRSQ) and 170–177 (SPRRRRSQ). An RNA binding region spans residues 177–183 (QSPASQC).

The protein belongs to the orthohepadnavirus core antigen family. Homodimerizes, then multimerizes. Interacts with cytosol exposed regions of viral L glycoprotein present in the reticulum-to-Golgi compartment. Interacts with human FLNB. Phosphorylated form interacts with host importin alpha; this interaction depends on the exposure of the NLS, which itself depends upon genome maturation and/or phosphorylation of the capsid protein. Interacts with host NUP153. Phosphorylated by host SRPK1, SRPK2, and maybe protein kinase C or GAPDH. Phosphorylation is critical for pregenomic RNA packaging. Protein kinase C phosphorylation is stimulated by HBx protein and may play a role in transport of the viral genome to the nucleus at the late step during the viral replication cycle.

Its subcellular location is the virion. It is found in the host cytoplasm. Self assembles to form an icosahedral capsid. Most capsids appear to be large particles with an icosahedral symmetry of T=4 and consist of 240 copies of capsid protein, though a fraction forms smaller T=3 particles consisting of 180 capsid proteins. Entering capsids are transported along microtubules to the nucleus. Phosphorylation of the capsid is thought to induce exposure of nuclear localization signal in the C-terminal portion of the capsid protein that allows binding to the nuclear pore complex via the importin (karyopherin-) alpha and beta. Capsids are imported in intact form through the nuclear pore into the nuclear basket, where it probably binds NUP153. Only capsids that contain the mature viral genome can release the viral DNA and capsid protein into the nucleoplasm. Immature capsids get stuck in the basket. Capsids encapsulate the pre-genomic RNA and the P protein. Pre-genomic RNA is reverse-transcribed into DNA while the capsid is still in the cytoplasm. The capsid can then either be directed to the nucleus, providing more genomes for transcription, or bud through the endoplasmic reticulum to provide new virions. This Hepatitis B virus genotype F2 (isolate Brazil/w4B) (HBV-F) protein is Capsid protein.